The chain runs to 244 residues: MARKRRLTGEAALNAAYGKSDHAPLLEAWGVDLPDDLLRLALTHRSFANENGHLPNNERLEFLGDAVLGLAVAEQLYRQFPERAESDISKMRSGVVNMYALADVARRLGMGDYILLGRGEMLTGGKDKHSILADSVESMLGAIYLHHGFEVARATVLRLFAEKITEAPTTGLTMDWKTVLLEKLSDMKLPLPTYEVRGEGPEHDKTFYATVTIEDLVTHGEGHTKKVAEHAAAKQAVQKLNERA.

The 128-residue stretch at 21–148 (DHAPLLEAWG…MLGAIYLHHG (128 aa)) folds into the RNase III domain. Glu61 is a binding site for Mg(2+). The active site involves Asp65. Residues Asp134 and Glu137 each coordinate Mg(2+). Residue Glu137 is part of the active site. The 68-residue stretch at 175–242 (DWKTVLLEKL…AKQAVQKLNE (68 aa)) folds into the DRBM domain.

This sequence belongs to the ribonuclease III family. As to quaternary structure, homodimer. Requires Mg(2+) as cofactor.

The protein resides in the cytoplasm. It carries out the reaction Endonucleolytic cleavage to 5'-phosphomonoester.. Functionally, digests double-stranded RNA. Involved in the processing of primary rRNA transcript to yield the immediate precursors to the large and small rRNAs (23S and 16S). Processes some mRNAs, and tRNAs when they are encoded in the rRNA operon. Processes pre-crRNA and tracrRNA of type II CRISPR loci if present in the organism. This Corynebacterium jeikeium (strain K411) protein is Ribonuclease 3.